Here is a 340-residue protein sequence, read N- to C-terminus: GTPase Obg (340 aa).

Positions 1–159 (MRFIDKAKIH…RWIELELKLI (159 aa)) constitute an Obg domain. Positions 160–331 (ADIGIIGFPN…LIKLIAEVYE (172 aa)) constitute an OBG-type G domain. Residues 166 to 173 (GFPNAGKS), 191 to 195 (FTTLT), 213 to 216 (DIPG), 283 to 286 (NKID), and 312 to 314 (SLV) each bind GTP. Positions 173 and 193 each coordinate Mg(2+).

This sequence belongs to the TRAFAC class OBG-HflX-like GTPase superfamily. OBG GTPase family. In terms of assembly, monomer. Requires Mg(2+) as cofactor.

It is found in the cytoplasm. In terms of biological role, an essential GTPase which binds GTP, GDP and possibly (p)ppGpp with moderate affinity, with high nucleotide exchange rates and a fairly low GTP hydrolysis rate. Plays a role in control of the cell cycle, stress response, ribosome biogenesis and in those bacteria that undergo differentiation, in morphogenesis control. The sequence is that of GTPase Obg from Persephonella marina (strain DSM 14350 / EX-H1).